The following is a 135-amino-acid chain: Ribosome-binding factor A (135 aa).

This sequence belongs to the RbfA family. As to quaternary structure, monomer. Binds 30S ribosomal subunits, but not 50S ribosomal subunits or 70S ribosomes.

It localises to the cytoplasm. One of several proteins that assist in the late maturation steps of the functional core of the 30S ribosomal subunit. Associates with free 30S ribosomal subunits (but not with 30S subunits that are part of 70S ribosomes or polysomes). Required for efficient processing of 16S rRNA. May interact with the 5'-terminal helix region of 16S rRNA. In Sinorhizobium fredii (strain NBRC 101917 / NGR234), this protein is Ribosome-binding factor A.